Reading from the N-terminus, the 267-residue chain is Probable ribose-5-phosphate isomerase 1 (267 aa).

Residue glycine 2 is modified to N-acetylglycine. The residue at position 92 (serine 92) is a Phosphoserine.

The protein belongs to the ribose 5-phosphate isomerase family. In terms of tissue distribution, expressed in roots, cotyledons, leaves and flowers.

The protein resides in the cytoplasm. The catalysed reaction is aldehydo-D-ribose 5-phosphate = D-ribulose 5-phosphate. It participates in carbohydrate degradation; pentose phosphate pathway; D-ribose 5-phosphate from D-ribulose 5-phosphate (non-oxidative stage): step 1/1. In terms of biological role, catalyzes the reversible conversion of ribose-5-phosphate to ribulose 5-phosphate. The sequence is that of Probable ribose-5-phosphate isomerase 1 (RPI1) from Arabidopsis thaliana (Mouse-ear cress).